We begin with the raw amino-acid sequence, 282 residues long: 4-diphosphocytidyl-2-C-methyl-D-erythritol kinase (282 aa).

K9 is a catalytic residue. 98-108 (PMGGGLGGGSS) is an ATP binding site. Residue D140 is part of the active site.

The protein belongs to the GHMP kinase family. IspE subfamily. Homodimer.

The enzyme catalyses 4-CDP-2-C-methyl-D-erythritol + ATP = 4-CDP-2-C-methyl-D-erythritol 2-phosphate + ADP + H(+). It functions in the pathway isoprenoid biosynthesis; isopentenyl diphosphate biosynthesis via DXP pathway; isopentenyl diphosphate from 1-deoxy-D-xylulose 5-phosphate: step 3/6. Its function is as follows. Catalyzes the phosphorylation of the position 2 hydroxy group of 4-diphosphocytidyl-2C-methyl-D-erythritol. The sequence is that of 4-diphosphocytidyl-2-C-methyl-D-erythritol kinase from Salmonella agona (strain SL483).